Consider the following 107-residue polypeptide: Putative pterin-4-alpha-carbinolamine dehydratase (107 aa).

This sequence belongs to the pterin-4-alpha-carbinolamine dehydratase family.

The enzyme catalyses (4aS,6R)-4a-hydroxy-L-erythro-5,6,7,8-tetrahydrobiopterin = (6R)-L-erythro-6,7-dihydrobiopterin + H2O. The chain is Putative pterin-4-alpha-carbinolamine dehydratase from Paracoccus denitrificans (strain Pd 1222).